The sequence spans 427 residues: Glutamate-1-semialdehyde 2,1-aminomutase (427 aa).

Lysine 265 is modified (N6-(pyridoxal phosphate)lysine).

This sequence belongs to the class-III pyridoxal-phosphate-dependent aminotransferase family. HemL subfamily. In terms of assembly, homodimer. Pyridoxal 5'-phosphate serves as cofactor.

The protein resides in the cytoplasm. The enzyme catalyses (S)-4-amino-5-oxopentanoate = 5-aminolevulinate. It participates in porphyrin-containing compound metabolism; protoporphyrin-IX biosynthesis; 5-aminolevulinate from L-glutamyl-tRNA(Glu): step 2/2. In Pseudomonas aeruginosa (strain UCBPP-PA14), this protein is Glutamate-1-semialdehyde 2,1-aminomutase.